Consider the following 258-residue polypeptide: MPETPLMRDNGPVNHADQDAPAVPEEGQTKDSKGSRLHPRVTSFRSRRGALTVAQQESWDRQWPRIGADVSDHRLDAPSWFGRDAPLILEIGSGTGTATAAMAKAEPHVNLMAVEVYRPGLAQLLQQIERDEIPNIRVLRGDAMDVLENMIEPESLTGVRVFFPDPWPKARHHKRRLLQSPTFALIASRLKAGGVLHVATDHAEYAEAIAEAGNAEPLLTSLDWESPMTHERPVTKFEDKAHQVGSAITELIWGKIRS.

The segment at Met-1–Thr-42 is disordered. Glu-90, Glu-115, Asp-142, and Asp-165 together coordinate S-adenosyl-L-methionine. Asp-165 is a catalytic residue. Substrate-binding positions include Lys-169, Asp-201, and Thr-235–Glu-238.

It belongs to the class I-like SAM-binding methyltransferase superfamily. TrmB family.

It catalyses the reaction guanosine(46) in tRNA + S-adenosyl-L-methionine = N(7)-methylguanosine(46) in tRNA + S-adenosyl-L-homocysteine. It functions in the pathway tRNA modification; N(7)-methylguanine-tRNA biosynthesis. In terms of biological role, catalyzes the formation of N(7)-methylguanine at position 46 (m7G46) in tRNA. This Rhodococcus jostii (strain RHA1) protein is tRNA (guanine-N(7)-)-methyltransferase.